The sequence spans 758 residues: Vitamin K-dependent gamma-carboxylase (758 aa).

Residues 1 to 29 (MAVHRGSARAAPASDKVQKNKPAQTSGLE) form a disordered region. Position 2 is an N-acetylalanine (alanine 2). At 2-60 (AVHRGSARAAPASDKVQKNKPAQTSGLEQGSRMARIFGFEWADLSSWQSVVTLLNRPTD) the chain is on the cytoplasmic side. Residues 61–81 (PANLAVFRFLFAFLMLLDIPQ) traverse the membrane as a helical segment. The Lumenal portion of the chain corresponds to 82–113 (ERGLSSLDRKYLDGLDVCRFPLLDALRPLPLD). A disulfide bond links cysteine 99 and cysteine 450. The chain crosses the membrane as a helical span at residues 114 to 134 (WMYLVYTIMFLGALGMMLGLW). Topologically, residues 135–136 (YR) are cytoplasmic. Residues 137–157 (LSCMLFLLPYWYVFLLDKTSW) form a helical membrane-spanning segment. Over 158–292 (NNHSYLYGLL…VSYFHCMNSQ (135 aa)) the chain is Lumenal. Residues 293–313 (LFSIGMFPYVMLASSPLFCSA) form a helical membrane-spanning segment. Over 314–361 (EWPRKLVARCPKRLQELLPAKAAPRPSASCVYKRARAKAGQKPGLRHH) the chain is Cytoplasmic. A helical transmembrane segment spans residues 362-382 (LGTVFTLLYLLEQLFLPYSHF). Over 383–758 (LTQGYNNWTN…PDSEHVHSEL (376 aa)) the chain is Lumenal. The disordered stretch occupies residues 727–758 (PFEPVDESSASNTDSSDPHPSEPDSEHVHSEL). Over residues 742–758 (SDPHPSEPDSEHVHSEL) the composition is skewed to basic and acidic residues.

It belongs to the vitamin K-dependent gamma-carboxylase family. As to quaternary structure, monomer. Interacts with CALU.

It localises to the endoplasmic reticulum membrane. The enzyme catalyses 4-carboxy-L-glutamyl-[protein] + 2,3-epoxyphylloquinone + H2O + H(+) = phylloquinol + L-glutamyl-[protein] + CO2 + O2. Its function is as follows. Mediates the vitamin K-dependent carboxylation of glutamate residues to calcium-binding gamma-carboxyglutamate (Gla) residues with the concomitant conversion of the reduced hydroquinone form of vitamin K to vitamin K epoxide. Catalyzes gamma-carboxylation of various proteins, such as blood coagulation factors (F2, F7, F9 and F10), osteocalcin (BGLAP) or matrix Gla protein (MGP). This Rattus norvegicus (Rat) protein is Vitamin K-dependent gamma-carboxylase (Ggcx).